Here is a 354-residue protein sequence, read N- to C-terminus: S-adenosylmethionine:tRNA ribosyltransferase-isomerase (354 aa).

The protein belongs to the QueA family. Monomer.

It localises to the cytoplasm. The enzyme catalyses 7-aminomethyl-7-carbaguanosine(34) in tRNA + S-adenosyl-L-methionine = epoxyqueuosine(34) in tRNA + adenine + L-methionine + 2 H(+). The protein operates within tRNA modification; tRNA-queuosine biosynthesis. Its function is as follows. Transfers and isomerizes the ribose moiety from AdoMet to the 7-aminomethyl group of 7-deazaguanine (preQ1-tRNA) to give epoxyqueuosine (oQ-tRNA). The polypeptide is S-adenosylmethionine:tRNA ribosyltransferase-isomerase (Salmonella newport (strain SL254)).